Here is a 272-residue protein sequence, read N- to C-terminus: Large ribosomal subunit protein uL2cz/uL2cy (272 aa).

Disordered regions lie at residues 1–33 (MAIHLYKTSTSSTRNGAVQVKSNPRNNLISGQR) and 220–272 (VMNP…RRSK). Ala2 carries the N-methylalanine modification. The span at 7 to 30 (KTSTSSTRNGAVQVKSNPRNNLIS) shows a compositional bias: polar residues.

This sequence belongs to the universal ribosomal protein uL2 family. Component of the chloroplast large ribosomal subunit (LSU). Mature 70S chloroplast ribosomes of higher plants consist of a small (30S) and a large (50S) subunit. The 30S small subunit contains 1 molecule of ribosomal RNA (16S rRNA) and 24 different proteins. The 50S large subunit contains 3 rRNA molecules (23S, 5S and 4.5S rRNA) and 33 different proteins.

It is found in the plastid. The protein localises to the chloroplast. Component of the chloroplast ribosome (chloro-ribosome), a dedicated translation machinery responsible for the synthesis of chloroplast genome-encoded proteins, including proteins of the transcription and translation machinery and components of the photosynthetic apparatus. This is Large ribosomal subunit protein uL2cz/uL2cy (rpl2-A) from Spinacia oleracea (Spinach).